Here is a 221-residue protein sequence, read N- to C-terminus: 7-cyano-7-deazaguanine synthase (221 aa).

10 to 20 (FSGGQDSTTCL) serves as a coordination point for ATP. C186, C195, C198, and C201 together coordinate Zn(2+).

It belongs to the QueC family. Homodimer. Zn(2+) is required as a cofactor.

The enzyme catalyses 7-carboxy-7-deazaguanine + NH4(+) + ATP = 7-cyano-7-deazaguanine + ADP + phosphate + H2O + H(+). The protein operates within purine metabolism; 7-cyano-7-deazaguanine biosynthesis. Its function is as follows. Catalyzes the ATP-dependent conversion of 7-carboxy-7-deazaguanine (CDG) to 7-cyano-7-deazaguanine (preQ(0)). This chain is 7-cyano-7-deazaguanine synthase, found in Geobacillus kaustophilus (strain HTA426).